The following is a 106-amino-acid chain: Small ribosomal subunit protein uS10 (106 aa).

It belongs to the universal ribosomal protein uS10 family. In terms of assembly, part of the 30S ribosomal subunit.

Functionally, involved in the binding of tRNA to the ribosomes. This Pyrobaculum arsenaticum (strain DSM 13514 / JCM 11321 / PZ6) protein is Small ribosomal subunit protein uS10.